The sequence spans 447 residues: Cysteine--tRNA ligase (447 aa).

Cys-28 contacts Zn(2+). The short motif at 30–40 is the 'HIGH' region element; that stretch reads PTVYNYIHIGN. Cys-211, His-236, and Glu-240 together coordinate Zn(2+). The short motif at 268 to 272 is the 'KMSKS' region element; the sequence is KMSKS. Position 271 (Lys-271) interacts with ATP.

It belongs to the class-I aminoacyl-tRNA synthetase family. As to quaternary structure, monomer. Zn(2+) is required as a cofactor.

Its subcellular location is the cytoplasm. It carries out the reaction tRNA(Cys) + L-cysteine + ATP = L-cysteinyl-tRNA(Cys) + AMP + diphosphate. This is Cysteine--tRNA ligase from Streptococcus pyogenes serotype M28 (strain MGAS6180).